A 308-amino-acid polypeptide reads, in one-letter code: Bifunctional protein FolD (308 aa).

NADP(+) contacts are provided by residues 175-177 (GRS), Ser-200, and Ile-241.

The protein belongs to the tetrahydrofolate dehydrogenase/cyclohydrolase family. As to quaternary structure, homodimer.

The enzyme catalyses (6R)-5,10-methylene-5,6,7,8-tetrahydrofolate + NADP(+) = (6R)-5,10-methenyltetrahydrofolate + NADPH. It catalyses the reaction (6R)-5,10-methenyltetrahydrofolate + H2O = (6R)-10-formyltetrahydrofolate + H(+). Its pathway is one-carbon metabolism; tetrahydrofolate interconversion. Its function is as follows. Catalyzes the oxidation of 5,10-methylenetetrahydrofolate to 5,10-methenyltetrahydrofolate and then the hydrolysis of 5,10-methenyltetrahydrofolate to 10-formyltetrahydrofolate. The sequence is that of Bifunctional protein FolD from Jannaschia sp. (strain CCS1).